Here is a 97-residue protein sequence, read N- to C-terminus: Large ribosomal subunit protein bL27 (97 aa).

The propeptide occupies 1-12 (MLKMTLNNLQLF). Residues 13–37 (AHKKGGGSTSNGRDSQAKRLGAKAA) form a disordered region.

It belongs to the bacterial ribosomal protein bL27 family. Post-translationally, the N-terminus is cleaved by ribosomal processing cysteine protease Prp.

This Streptococcus pneumoniae serotype 2 (strain D39 / NCTC 7466) protein is Large ribosomal subunit protein bL27.